The sequence spans 486 residues: Probable glycine dehydrogenase (decarboxylating) subunit 2 (486 aa).

The residue at position 269 (Lys269) is an N6-(pyridoxal phosphate)lysine.

It belongs to the GcvP family. C-terminal subunit subfamily. As to quaternary structure, the glycine cleavage system is composed of four proteins: P, T, L and H. In this organism, the P 'protein' is a heterodimer of two subunits. Pyridoxal 5'-phosphate is required as a cofactor.

The enzyme catalyses N(6)-[(R)-lipoyl]-L-lysyl-[glycine-cleavage complex H protein] + glycine + H(+) = N(6)-[(R)-S(8)-aminomethyldihydrolipoyl]-L-lysyl-[glycine-cleavage complex H protein] + CO2. In terms of biological role, the glycine cleavage system catalyzes the degradation of glycine. The P protein binds the alpha-amino group of glycine through its pyridoxal phosphate cofactor; CO(2) is released and the remaining methylamine moiety is then transferred to the lipoamide cofactor of the H protein. In Chlorobium phaeobacteroides (strain DSM 266 / SMG 266 / 2430), this protein is Probable glycine dehydrogenase (decarboxylating) subunit 2.